Consider the following 217-residue polypeptide: Adenylate kinase (217 aa).

10-15 (GAGKGT) contributes to the ATP binding site. An NMP region spans residues 30–59 (STGDMFREAVAAGTELGVKVQNILSSGALV). AMP-binding positions include Thr31, Arg36, 57–59 (ALV), 85–88 (GYPR), and Gln92. Residues 126–163 (SRRICPKCGKIYNLISMPPVSDQICDDCGEQLVIREDD) form an LID region. Arg127 serves as a coordination point for ATP. Zn(2+)-binding residues include Cys130 and Cys133. 136-137 (IY) provides a ligand contact to ATP. The Zn(2+) site is built by Cys150 and Cys153. 2 residues coordinate AMP: Arg160 and Arg171. ATP is bound at residue Arg199.

It belongs to the adenylate kinase family. As to quaternary structure, monomer.

It is found in the cytoplasm. It catalyses the reaction AMP + ATP = 2 ADP. It functions in the pathway purine metabolism; AMP biosynthesis via salvage pathway; AMP from ADP: step 1/1. Its function is as follows. Catalyzes the reversible transfer of the terminal phosphate group between ATP and AMP. Plays an important role in cellular energy homeostasis and in adenine nucleotide metabolism. This Pseudothermotoga lettingae (strain ATCC BAA-301 / DSM 14385 / NBRC 107922 / TMO) (Thermotoga lettingae) protein is Adenylate kinase.